The primary structure comprises 703 residues: Solute carrier family 28 member 3 (703 aa).

A compositionally biased stretch (basic and acidic residues) spans 1 to 19 (MSRADPGKNSEPSESKMSL). The interval 1-93 (MSRADPGKNS…DPEDDSEDEH (93 aa)) is disordered. Topologically, residues 1-117 (MSRADPGKNS…FCRKHRVVLR (117 aa)) are cytoplasmic. Positions 44-61 (QNTPGNSTVRNRVVQSGE) are enriched in polar residues. Residues 63–72 (GHAKQDDRQI) are compositionally biased toward basic and acidic residues. A helical membrane pass occupies residues 118–138 (STIWAVLLTGFLALVIAACAI). Residues 139–143 (NFHRA) lie on the Extracellular side of the membrane. The helical transmembrane segment at 144-164 (LPLFVITLVTIFFVIWDHLMA) threads the bilayer. Over 165–188 (KYEQRIDDFLSPGRRLLDRHWFWL) the chain is Cytoplasmic. Residues 189–209 (KWVVWSSLILAIILWLSLDTA) traverse the membrane as a helical segment. The Extracellular portion of the chain corresponds to 210 to 212 (KLG). The chain crosses the membrane as a helical span at residues 213–234 (QQNLVSFGGLIMYLILLFLFSK). Residues 235-242 (HPTRVYWR) lie on the Cytoplasmic side of the membrane. The helical transmembrane segment at 243-262 (PVFWGIGLQFLLGLLILRTR) threads the bilayer. Residues 263-299 (PGFVAFDWMGRQVQTFLGYTDTGARFVFGEKYTDHFF) are Extracellular-facing. A helical membrane pass occupies residues 300 to 320 (AFKILPIVVFFSTVMSMLYYL). Over 321-344 (GLMQWIIRKVGWLMLVTMGSSPIE) the chain is Cytoplasmic. The segment at residues 345–363 (SVVAAGNIFIGQTESPLLV) is an intramembrane region (helical). At 364–376 (QPYLPHVTKSELH) the chain is on the cytoplasmic side. The helical transmembrane segment at 377–399 (TIMTAGFATIAGSVLGAYISFGV) threads the bilayer. Residues 400-401 (SS) are Extracellular-facing. The helical transmembrane segment at 402–423 (THLLTASVMSAPAALAVAKLFW) threads the bilayer. Over 424–458 (PETEKPKITLKSAMKMENGDSRNLLEAASQGASSS) the chain is Cytoplasmic. A helical membrane pass occupies residues 459–484 (IPLVANIAANLIAFLALLSFVNSALS). Over 485–522 (WFGSMFNYPELSFELICSYIFMPFSFMMGVDWQDSFMV) the chain is Extracellular. Positions 523-542 (AKLIGYKTFFNEFVAYDHLS) form an intramembrane region, helical. At 543-581 (KLINLRKAAGPKFVNGVQQYMSIRSETIATYALCGFANF) the chain is on the extracellular side. Residues 582–592 (GSLGIVIGGLT) traverse the membrane as a helical segment. Topologically, residues 593-605 (SIAPSRKRDIASG) are cytoplasmic. Residues 606-628 (AMRALIAGTIACFMTACIAGILS) form a helical membrane-spanning segment. At 629-703 (DTPVDINCHH…LNCNWIPNKL (75 aa)) the chain is on the extracellular side.

This sequence belongs to the concentrative nucleoside transporter (CNT) (TC 2.A.41) family. As to quaternary structure, homotrimer.

The protein localises to the cell membrane. It catalyses the reaction thymidine(out) + 2 Na(+)(out) = thymidine(in) + 2 Na(+)(in). The catalysed reaction is cytidine(out) + 2 Na(+)(out) = cytidine(in) + 2 Na(+)(in). The enzyme catalyses uridine(out) + 2 Na(+)(out) = uridine(in) + 2 Na(+)(in). It carries out the reaction adenosine(out) + 2 Na(+)(out) = adenosine(in) + 2 Na(+)(in). It catalyses the reaction guanosine(out) + 2 Na(+)(out) = guanosine(in) + 2 Na(+)(in). The catalysed reaction is inosine(out) + 2 Na(+)(out) = inosine(in) + 2 Na(+)(in). In terms of biological role, sodium-dependent, pyrimidine- and purine-selective. Involved in the homeostasis of endogenous nucleosides. Exhibits the transport characteristics of the nucleoside transport system cib or N3 subtype (N3/cib) (with marked transport of both thymidine and inosine). Employs a 2:1 sodium/nucleoside ratio. Also able to transport gemcitabine, 3'-azido-3'-deoxythymidine (AZT), ribavirin and 3-deazauridine. The sequence is that of Solute carrier family 28 member 3 (Slc28a3) from Mus musculus (Mouse).